The sequence spans 1755 residues: Transposon Ty1-JR2 Gag-Pol polyprotein (1755 aa).

Positions 1–16 (MESQQLSQHSHISHGS) are enriched in low complexity. Disordered stretches follow at residues 1–93 (MESQ…MMTQ), 126–173 (PQSQ…RPPP), and 352–421 (GSRN…SKST). 3 stretches are compositionally biased toward polar residues: residues 48-60 (TKAN…TPAS), 71-93 (SPQT…MMTQ), and 127-152 (QSQF…GNTF). Positions 153-165 (TDSSSADSDMTST) are enriched in low complexity. Residues 299–401 (NNGIHINNKV…NSKSKTARAH (103 aa)) form an RNA-binding region. Residues 402-418 (NVSTSNNSPSTDNDSIS) show a composition bias toward low complexity. Ser-416 is subject to Phosphoserine. Residue Asp-461 is the For protease activity; shared with dimeric partner of the active site. Positions 583-640 (NVHTSESTRKYPYPFIHRMLAHANAQTIRYSLKNNTITYFNESDVDWSSAIDYQCPDC) are integrase-type zinc finger-like. Residues 660–835 (NSYEPFQYLH…AGLDISTLLP (176 aa)) form the Integrase catalytic domain. Residues Asp-671 and Asp-736 each contribute to the Mg(2+) site. Disordered regions lie at residues 956-1087 (SKAV…ETEK), 1092-1111 (RSPS…NIVP), and 1130-1186 (DLPL…EDNE). The span at 960–969 (SPTDSTPPST) shows a compositional bias: low complexity. The segment covering 1005–1015 (STPQISNIEST) has biased composition (polar residues). Over residues 1038-1053 (ESSHASKSKDFRHSDS) the composition is skewed to basic and acidic residues. Composition is skewed to polar residues over residues 1054–1082 (YSEN…QISD) and 1101–1111 (PENNSSHNIVP). The Bipartite nuclear localization signal motif lies at 1178–1212 (KKRSLEDNETEIKVSRDTWNTKNMRSLEPPRSKKR). The Reverse transcriptase Ty1/copia-type domain maps to 1338-1476 (NNYYITQLDI…DILGLEIKYQ (139 aa)). Mg(2+) contacts are provided by Asp-1346, Asp-1427, Asp-1428, Asp-1610, Glu-1652, and Asp-1685. One can recognise an RNase H Ty1/copia-type domain in the interval 1610–1752 (DASYGNQPYY…IKTFKLLTNK (143 aa)).

In terms of assembly, the capsid protein forms a homotrimer, from which the VLPs are assembled. The protease is a homodimer, whose active site consists of two apposed aspartic acid residues. Initially, virus-like particles (VLPs) are composed of the structural unprocessed proteins Gag and Gag-Pol, and also contain the host initiator methionine tRNA (tRNA(i)-Met) which serves as a primer for minus-strand DNA synthesis, and a dimer of genomic Ty RNA. Processing of the polyproteins occurs within the particle and proceeds by an ordered pathway, called maturation. First, the protease (PR) is released by autocatalytic cleavage of the Gag-Pol polyprotein yielding capsid protein p45 and a Pol-p154 precursor protein. This cleavage is a prerequisite for subsequent processing of Pol-p154 at the remaining sites to release the mature structural and catalytic proteins. Maturation takes place prior to the RT reaction and is required to produce transposition-competent VLPs.

It is found in the cytoplasm. The protein localises to the nucleus. The enzyme catalyses DNA(n) + a 2'-deoxyribonucleoside 5'-triphosphate = DNA(n+1) + diphosphate. It catalyses the reaction Endonucleolytic cleavage to 5'-phosphomonoester.. Its function is as follows. Capsid protein (CA) is the structural component of the virus-like particle (VLP), forming the shell that encapsulates the retrotransposons dimeric RNA genome. The particles are assembled from trimer-clustered units and there are holes in the capsid shells that allow for the diffusion of macromolecules. CA also has nucleocapsid-like chaperone activity, promoting primer tRNA(i)-Met annealing to the multipartite primer-binding site (PBS), dimerization of Ty1 RNA and initiation of reverse transcription. The aspartyl protease (PR) mediates the proteolytic cleavages of the Gag and Gag-Pol polyproteins after assembly of the VLP. Functionally, reverse transcriptase/ribonuclease H (RT) is a multifunctional enzyme that catalyzes the conversion of the retro-elements RNA genome into dsDNA within the VLP. The enzyme displays a DNA polymerase activity that can copy either DNA or RNA templates, and a ribonuclease H (RNase H) activity that cleaves the RNA strand of RNA-DNA heteroduplexes during plus-strand synthesis and hydrolyzes RNA primers. The conversion leads to a linear dsDNA copy of the retrotransposon that includes long terminal repeats (LTRs) at both ends. In terms of biological role, integrase (IN) targets the VLP to the nucleus, where a subparticle preintegration complex (PIC) containing at least integrase and the newly synthesized dsDNA copy of the retrotransposon must transit the nuclear membrane. Once in the nucleus, integrase performs the integration of the dsDNA into the host genome. The polypeptide is Transposon Ty1-JR2 Gag-Pol polyprotein (TY1B-JR2) (Saccharomyces cerevisiae (strain ATCC 204508 / S288c) (Baker's yeast)).